Here is a 266-residue protein sequence, read N- to C-terminus: Metallo-beta-lactamase domain-containing protein 1 (266 aa).

The segment at 48 to 71 (LPQTRGPASSHRESPRGSGGAEAA) is disordered. Positions 114, 116, 118, 119, 169, 192, and 231 each coordinate Zn(2+). The disordered stretch occupies residues 229–266 (PGHGPPFRVLREASQPETEGGGNSQQEPVVGDEEPALH).

The protein belongs to the metallo-beta-lactamase superfamily. Glyoxalase II family. Homodimer. Requires Zn(2+) as cofactor.

The protein resides in the cytoplasm. Its subcellular location is the cytosol. It localises to the nucleus. It carries out the reaction a ribonucleotidyl-ribonucleotide-RNA + H2O = a 3'-end ribonucleotide-RNA + a 5'-end 5'-phospho-ribonucleoside-RNA + H(+). In terms of biological role, endoribonuclease that catalyzes the hydrolysis of histone-coding pre-mRNA 3'-end. Involved in histone pre-mRNA processing during the S-phase of the cell cycle, which is required for entering/progressing through S-phase. Cleaves histone pre-mRNA at a major and a minor cleavage site after the 5'-ACCCA-3' and the 5'-ACCCACA-3' sequence, respectively, and located downstream of the stem-loop. May require the presence of the HDE element located at the histone pre-RNA 3'-end to avoid non-specific cleavage. The protein is Metallo-beta-lactamase domain-containing protein 1 of Homo sapiens (Human).